The following is a 65-amino-acid chain: Large ribosomal subunit protein bL35 (65 aa).

The span at 1–45 (MPKMKSHSGAKKRFKKTGNGKIKRKKANKGHLLTKKNAKRKRQLR) shows a compositional bias: basic residues. Residues 1–65 (MPKMKSHSGA…RDRIKRMLST (65 aa)) are disordered. Positions 48 to 57 (VVVDDKANRD) are enriched in basic and acidic residues.

This sequence belongs to the bacterial ribosomal protein bL35 family.

In Salinibacter ruber (strain DSM 13855 / M31), this protein is Large ribosomal subunit protein bL35.